A 978-amino-acid polypeptide reads, in one-letter code: Transcription factor MYCGRDRAFT_87993 (978 aa).

C2H2-type zinc fingers lie at residues 2-24 and 30-52; these read VFCT…ILTH and FKCF…YTVH. The segment at residues 79–105 is a DNA-binding region (zn(2)-C6 fungal-type); the sequence is CSNCAKTKTKCDKKFPCSRCAGRNLRC. Disordered stretches follow at residues 113–231 and 426–445; these read ASKN…SPRF and THRE…PSGA. Low complexity predominate over residues 152–165; sequence SSSPSSQKSGTPIS. Over residues 432–445 the composition is skewed to polar residues; that stretch reads GTSNGSHSPNPSGA.

The protein localises to the nucleus. Transcription factor; part of the gene cluster 29 that mediates the biosynthesis of dihydroxynaphthalene (DHN)-melanin, a bluish-green pigment forming a dark layer in the conidial wall that protects the conidia from UV radiations. The chain is Transcription factor MYCGRDRAFT_87993 from Zymoseptoria tritici (strain CBS 115943 / IPO323) (Speckled leaf blotch fungus).